The sequence spans 156 residues: LIM domain only protein 3 (156 aa).

2 consecutive LIM zinc-binding domains span residues 22 to 84 (KGCA…LFGV) and 86 to 148 (GNCA…GLMK).

This is LIM domain only protein 3 from Xenopus laevis (African clawed frog).